A 219-amino-acid polypeptide reads, in one-letter code: Ribosomal RNA small subunit methyltransferase I (219 aa).

Belongs to the methyltransferase superfamily. RsmI family.

It is found in the cytoplasm. The enzyme catalyses cytidine(1402) in 16S rRNA + S-adenosyl-L-methionine = 2'-O-methylcytidine(1402) in 16S rRNA + S-adenosyl-L-homocysteine + H(+). In terms of biological role, catalyzes the 2'-O-methylation of the ribose of cytidine 1402 (C1402) in 16S rRNA. This is Ribosomal RNA small subunit methyltransferase I from Coprothermobacter proteolyticus (strain ATCC 35245 / DSM 5265 / OCM 4 / BT).